We begin with the raw amino-acid sequence, 121 residues long: MQEKDCIFCKIVRGEVPAKKVYEDDKVLAFHDINPVAPVHILIIPKKHIMGIQTLEPEDECLVGHMFYVARKIAEDLGIAPDENLNKGYRLVFNVGKDAGQSVFHLHLHLIGGREMSWPPG.

Residues I7 to G121 enclose the HIT domain. The Histidine triad motif signature appears at H105–H109.

This is an uncharacterized protein from Aquifex aeolicus (strain VF5).